Here is a 335-residue protein sequence, read N- to C-terminus: Glyceraldehyde-3-phosphate dehydrogenase (335 aa).

Residues 10 to 11 (RI), Asp-31, Arg-75, and Thr-122 contribute to the NAD(+) site. Residues 152–154 (SCT) and Thr-183 contribute to the D-glyceraldehyde 3-phosphate site. Cys-153 serves as the catalytic Nucleophile. NAD(+) is bound at residue Asn-184. Residues Arg-198, 211–212 (TG), and Arg-234 each bind D-glyceraldehyde 3-phosphate. Position 318 (Asn-318) interacts with NAD(+).

This sequence belongs to the glyceraldehyde-3-phosphate dehydrogenase family. Homotetramer.

Its subcellular location is the cytoplasm. The enzyme catalyses D-glyceraldehyde 3-phosphate + phosphate + NAD(+) = (2R)-3-phospho-glyceroyl phosphate + NADH + H(+). It participates in carbohydrate degradation; glycolysis; pyruvate from D-glyceraldehyde 3-phosphate: step 1/5. Its function is as follows. Catalyzes the oxidative phosphorylation of glyceraldehyde 3-phosphate (G3P) to 1,3-bisphosphoglycerate (BPG) using the cofactor NAD. The first reaction step involves the formation of a hemiacetal intermediate between G3P and a cysteine residue, and this hemiacetal intermediate is then oxidized to a thioester, with concomitant reduction of NAD to NADH. The reduced NADH is then exchanged with the second NAD, and the thioester is attacked by a nucleophilic inorganic phosphate to produce BPG. This chain is Glyceraldehyde-3-phosphate dehydrogenase (gap), found in Borreliella burgdorferi (strain ATCC 35210 / DSM 4680 / CIP 102532 / B31) (Borrelia burgdorferi).